A 105-amino-acid chain; its full sequence is Heme oxygenase (mycobilin-producing) (105 aa).

The 90-residue stretch at 3–92 folds into the ABM domain; the sequence is VVKINAIEVP…VATGASLLEF (90 aa). Heme-binding positions include 22–26, His75, and 83–86; these read RFAHR and VATG.

This sequence belongs to the antibiotic biosynthesis monooxygenase family. Homodimer.

The catalysed reaction is heme b + 3 AH2 + 3 O2 + 2 H(+) = mycobilin a + Fe(2+) + 3 A + 3 H2O. It catalyses the reaction heme b + 3 AH2 + 3 O2 + 2 H(+) = mycobilin b + Fe(2+) + 3 A + 3 H2O. Catalyzes the oxidative degradation of the heme macrocyclic porphyrin ring in the presence of a suitable electron donor such as ascorbate or NADPH--cytochrome P450 reductase, with subsequent release of free iron. This chain is Heme oxygenase (mycobilin-producing) (mhuD), found in Mycobacterium tuberculosis (strain CDC 1551 / Oshkosh).